The sequence spans 157 residues: 2-C-methyl-D-erythritol 2,4-cyclodiphosphate synthase (157 aa).

The a divalent metal cation site is built by Asp-8 and His-10. 4-CDP-2-C-methyl-D-erythritol 2-phosphate-binding positions include Asp-8–His-10 and His-34–Ser-35. Position 42 (His-42) interacts with a divalent metal cation. Residues Asp-56–Gly-58, Thr-132–Glu-135, and Arg-142 contribute to the 4-CDP-2-C-methyl-D-erythritol 2-phosphate site.

Belongs to the IspF family. Homotrimer. Requires a divalent metal cation as cofactor.

It carries out the reaction 4-CDP-2-C-methyl-D-erythritol 2-phosphate = 2-C-methyl-D-erythritol 2,4-cyclic diphosphate + CMP. Its pathway is isoprenoid biosynthesis; isopentenyl diphosphate biosynthesis via DXP pathway; isopentenyl diphosphate from 1-deoxy-D-xylulose 5-phosphate: step 4/6. In terms of biological role, involved in the biosynthesis of isopentenyl diphosphate (IPP) and dimethylallyl diphosphate (DMAPP), two major building blocks of isoprenoid compounds. Catalyzes the conversion of 4-diphosphocytidyl-2-C-methyl-D-erythritol 2-phosphate (CDP-ME2P) to 2-C-methyl-D-erythritol 2,4-cyclodiphosphate (ME-CPP) with a corresponding release of cytidine 5-monophosphate (CMP). This Chlorobaculum tepidum (strain ATCC 49652 / DSM 12025 / NBRC 103806 / TLS) (Chlorobium tepidum) protein is 2-C-methyl-D-erythritol 2,4-cyclodiphosphate synthase.